The following is a 352-amino-acid chain: fMet-Leu-Phe receptor (352 aa).

Residues 1 to 27 (MDSNASLPLNVSGGTQATPAGLVVLDV) lie on the Extracellular side of the membrane. Asn4 and Asn10 each carry an N-linked (GlcNAc...) asparagine glycan. The chain crosses the membrane as a helical span at residues 28-50 (FSYLILVVTFVLGVLGNGLVIWV). The Cytoplasmic segment spans residues 51–61 (TGFRMTHTVTT). A helical transmembrane segment spans residues 62 to 83 (ISYLNLALADFSFTSTLPFFIV). The Extracellular segment spans residues 84-100 (TKALGGHWPFGWFLCKF). Cysteines 98 and 178 form a disulfide. Residues 101 to 121 (VFTIVDINLFGSVFLIALIAL) traverse the membrane as a helical segment. The Cytoplasmic portion of the chain corresponds to 122–140 (DRCICVLHPVWAQNHRNVS). A helical membrane pass occupies residues 141–162 (LAKKVIVGPWICALLLTLPVII). The Extracellular portion of the chain corresponds to 163–207 (RVTTLSHPRAPGKMACTFDWSPWTEDPAEKLKVAISMFMVRGIIR). Residues 208 to 228 (FIIGFSTPMSIVAVCYGLIAT) traverse the membrane as a helical segment. Residues 229-244 (KIHRQGLIKSSRPLRV) are Cytoplasmic-facing. Residues 245–268 (LSFVVASFLLCWSPYQIAALIATV) traverse the membrane as a helical segment. Topologically, residues 269–287 (RIRELLLGMGKDLRIVLDV) are extracellular. A helical transmembrane segment spans residues 288–307 (TSFVAFFNSCLNPMLYVFMG). Over 308–352 (QDFRERLIHSLPASLERALSEDSAQTSDTGTNSTSAPAEAELQAI) the chain is Cytoplasmic.

This sequence belongs to the G-protein coupled receptor 1 family. Phosphorylated; which is necessary for desensitization. In terms of tissue distribution, neutrophils.

The protein localises to the cell membrane. High affinity receptor for N-formyl-methionyl peptides (fMLP), which are powerful neutrophil chemotactic factors. Binding of fMLP to the receptor stimulates intracellular calcium mobilization and superoxide anion release. This response is mediated via a G-protein that activates a phosphatidylinositol-calcium second messenger system. Receptor for TAFA4, mediates its effects on chemoattracting macrophages, promoting phagocytosis and increasing ROS release. Receptor for cathepsin CTSG, leading to increased phagocyte chemotaxis. This Oryctolagus cuniculus (Rabbit) protein is fMet-Leu-Phe receptor (FPR1).